The sequence spans 594 residues: Elongation factor 4 (594 aa).

Residues 2–184 (KNIRNFSIIA…TIVAKVPAPE (183 aa)) form the tr-type G domain. GTP is bound by residues 14 to 19 (DHGKST) and 131 to 134 (NKID).

This sequence belongs to the TRAFAC class translation factor GTPase superfamily. Classic translation factor GTPase family. LepA subfamily.

Its subcellular location is the cell inner membrane. The enzyme catalyses GTP + H2O = GDP + phosphate + H(+). In terms of biological role, required for accurate and efficient protein synthesis under certain stress conditions. May act as a fidelity factor of the translation reaction, by catalyzing a one-codon backward translocation of tRNAs on improperly translocated ribosomes. Back-translocation proceeds from a post-translocation (POST) complex to a pre-translocation (PRE) complex, thus giving elongation factor G a second chance to translocate the tRNAs correctly. Binds to ribosomes in a GTP-dependent manner. This is Elongation factor 4 from Francisella tularensis subsp. holarctica (strain FTNF002-00 / FTA).